The following is a 200-amino-acid chain: Urease accessory protein UreG (200 aa).

Glycine 11–threonine 18 contributes to the GTP binding site.

The protein belongs to the SIMIBI class G3E GTPase family. UreG subfamily. In terms of assembly, homodimer. UreD, UreF and UreG form a complex that acts as a GTP-hydrolysis-dependent molecular chaperone, activating the urease apoprotein by helping to assemble the nickel containing metallocenter of UreC. The UreE protein probably delivers the nickel.

The protein resides in the cytoplasm. In terms of biological role, facilitates the functional incorporation of the urease nickel metallocenter. This process requires GTP hydrolysis, probably effectuated by UreG. This is Urease accessory protein UreG from Thermosynechococcus vestitus (strain NIES-2133 / IAM M-273 / BP-1).